A 711-amino-acid polypeptide reads, in one-letter code: Catalase HPII (711 aa).

Over residues 1 to 10 (MPSKKTDAPK) the composition is skewed to basic and acidic residues. The interval 1 to 27 (MPSKKTDAPKQSEAAGTQTPDRANTNA) is disordered. Residues 14-27 (AAGTQTPDRANTNA) show a composition bias toward polar residues. Active-site residues include H92 and N165. Y379 serves as a coordination point for heme.

This sequence belongs to the catalase family. HPII subfamily. The cofactor is heme.

The protein resides in the cytoplasm. The catalysed reaction is 2 H2O2 = O2 + 2 H2O. Decomposes hydrogen peroxide into water and oxygen; serves to protect cells from the toxic effects of hydrogen peroxide. This Pseudomonas putida (Arthrobacter siderocapsulatus) protein is Catalase HPII (katE).